The sequence spans 78 residues: UPF0291 protein Ldb1355 (78 aa).

The protein belongs to the UPF0291 family.

It localises to the cytoplasm. The polypeptide is UPF0291 protein Ldb1355 (Lactobacillus delbrueckii subsp. bulgaricus (strain ATCC 11842 / DSM 20081 / BCRC 10696 / JCM 1002 / NBRC 13953 / NCIMB 11778 / NCTC 12712 / WDCM 00102 / Lb 14)).